A 132-amino-acid chain; its full sequence is Small ribosomal subunit protein uS8c (132 aa).

This sequence belongs to the universal ribosomal protein uS8 family. Part of the 30S ribosomal subunit.

The protein resides in the plastid. Its subcellular location is the chloroplast. In terms of biological role, one of the primary rRNA binding proteins, it binds directly to 16S rRNA central domain where it helps coordinate assembly of the platform of the 30S subunit. The polypeptide is Small ribosomal subunit protein uS8c (rps8) (Psilotum nudum (Whisk fern)).